A 218-amino-acid polypeptide reads, in one-letter code: Probable carboxylesterase clz11 (218 aa).

The short motif at 7–9 is the Involved in the stabilization of the negatively charged intermediate by the formation of the oxyanion hole element; that stretch reads LVG. The active site involves serine 77.

Belongs to the 'GDXG' lipolytic enzyme family.

It carries out the reaction a carboxylic ester + H2O = an alcohol + a carboxylate + H(+). Its pathway is secondary metabolite biosynthesis. In terms of biological role, probable carboxylesterase; part of the gene cluster that mediates the biosynthesis of squalestatin S1 (SQS1, also known as zaragozic acid A), a heavily oxidized fungal polyketide that offers potent cholesterol lowering activity by targeting squalene synthase (SS). SQS1 is composed of a 2,8-dioxobicyclic[3.2.1]octane-3,4,5-tricarboxyclic acid core that is connected to two lipophilic polyketide arms. These initial steps feature the priming of an unusual benzoic acid starter unit onto the highly reducing polyketide synthase clz14, followed by oxaloacetate extension and product release to generate a tricarboxylic acid containing product. The phenylalanine ammonia lyase (PAL) clz10 and the acyl-CoA ligase clz12 are involved in transforming phenylalanine into benzoyl-CoA. The citrate synthase-like protein clz17 is involved in connecting the C-alpha-carbons of the hexaketide chain and oxaloacetate to afford the tricarboxylic acid unit. The potential hydrolytic enzymes, clz11 and clz13, are in close proximity to pks2 and may participate in product release. On the other side, the tetraketide arm is synthesized by a the squalestatin tetraketide synthase clz2 and enzymatically esterified to the core in the last biosynthetic step, by the acetyltransferase clz6. The biosynthesis of the tetraketide must involve 3 rounds of chain extension. After the first and second rounds methyl-transfer occurs, and in all rounds of extension the ketoreductase and dehydratase are active. The enoyl reductase and C-MeT of clz2 are not active in the final round of extension. The acetyltransferase clz6 appears to have a broad substrate selectivity for its acyl CoA substrate, allowing the in vitro synthesis of novel squalestatins. The biosynthesis of SQS1 requires several oxidative steps likely performed by oxidoreductases clz3, clz15 and clz16. Finally, in support of the identification of the cluster as being responsible for SQS1 production, the cluster contains a gene encoding a putative squalene synthase (SS) clz20, suggesting a likely mechanism for self-resistance. The protein is Probable carboxylesterase clz11 of Cochliobolus lunatus (Filamentous fungus).